A 446-amino-acid chain; its full sequence is Chromosomal replication initiator protein DnaA (446 aa).

Residues 1–92 form a domain I, interacts with DnaA modulators region; that stretch reads MENISDLWNS…SQAEEEIDLP (92 aa). The segment at 93–109 is domain II; that stretch reads PAKPNAAQDDSNHLPQS. The tract at residues 110 to 326 is domain III, AAA+ region; it reads MLNPKYTFDT…GALIRVVAYS (217 aa). Gly154, Gly156, Lys157, and Thr158 together coordinate ATP. The domain IV, binds dsDNA stretch occupies residues 327 to 446; that stretch reads SLINKDINAD…QVEEINDILK (120 aa).

The protein belongs to the DnaA family. Oligomerizes as a right-handed, spiral filament on DNA at oriC.

The protein localises to the cytoplasm. In terms of biological role, plays an essential role in the initiation and regulation of chromosomal replication. ATP-DnaA binds to the origin of replication (oriC) to initiate formation of the DNA replication initiation complex once per cell cycle. Binds the DnaA box (a 9 base pair repeat at the origin) and separates the double-stranded (ds)DNA. Forms a right-handed helical filament on oriC DNA; dsDNA binds to the exterior of the filament while single-stranded (ss)DNA is stabiized in the filament's interior. The ATP-DnaA-oriC complex binds and stabilizes one strand of the AT-rich DNA unwinding element (DUE), permitting loading of DNA polymerase. After initiation quickly degrades to an ADP-DnaA complex that is not apt for DNA replication. Binds acidic phospholipids. The sequence is that of Chromosomal replication initiator protein DnaA from Bacillus anthracis (strain A0248).